A 1286-amino-acid polypeptide reads, in one-letter code: Galactose/N-acetyl-D-galactosamine lectin heavy subunit 2 (1286 aa).

The signal sequence occupies residues 1–15; that stretch reads MKLLLLNILLLCCLA. Residues 16-1227 lie on the Extracellular side of the membrane; it reads DKLNEFSADI…NNVGAIAAAT (1212 aa). Asn200, Asn331, Asn384, Asn462, Asn652, Asn883, Asn1197, and Asn1207 each carry an N-linked (GlcNAc...) asparagine glycan. The chain crosses the membrane as a helical span at residues 1228-1248; that stretch reads TVAVVVVAVVVALIVVSIGLF. Over 1249–1286 the chain is Cytoplasmic; the sequence is KTYQLVSSAMKNAITTTNENAEYVGADNEATNAATYNG.

Heterodimer composed of a 170 kDa heavy subunit (hgl) and a 31/35 kDa light subunit (lgl); disulfide-linked. N-glycosylated.

It is found in the cell membrane. Functionally, lectin which binds galactose and N-acetyl-D-galactosamine of host glycoproteins and thus mediates adhesion to host cells. Mediates adherence to host colonic mucins, an essential step for pathogenic tissue invasion. This is Galactose/N-acetyl-D-galactosamine lectin heavy subunit 2 from Entamoeba histolytica (strain ATCC 30459 / HM-1:IMSS / ABRM).